The sequence spans 452 residues: Serine--tRNA ligase (452 aa).

251–253 (TSE) is an L-serine binding site. Residue 282–284 (RSE) coordinates ATP. An L-serine-binding site is contributed by Glu305. 369–372 (EISS) contacts ATP. Ser404 contributes to the L-serine binding site.

This sequence belongs to the class-II aminoacyl-tRNA synthetase family. Type-1 seryl-tRNA synthetase subfamily. In terms of assembly, homodimer. The tRNA molecule binds across the dimer.

The protein localises to the cytoplasm. The enzyme catalyses tRNA(Ser) + L-serine + ATP = L-seryl-tRNA(Ser) + AMP + diphosphate + H(+). The catalysed reaction is tRNA(Sec) + L-serine + ATP = L-seryl-tRNA(Sec) + AMP + diphosphate + H(+). It participates in aminoacyl-tRNA biosynthesis; selenocysteinyl-tRNA(Sec) biosynthesis; L-seryl-tRNA(Sec) from L-serine and tRNA(Sec): step 1/1. Its function is as follows. Catalyzes the attachment of serine to tRNA(Ser). Is also able to aminoacylate tRNA(Sec) with serine, to form the misacylated tRNA L-seryl-tRNA(Sec), which will be further converted into selenocysteinyl-tRNA(Sec). This Albidiferax ferrireducens (strain ATCC BAA-621 / DSM 15236 / T118) (Rhodoferax ferrireducens) protein is Serine--tRNA ligase.